The chain runs to 216 residues: Adenylate kinase (216 aa).

10 to 15 (GAGKGT) is an ATP binding site. The interval 30–59 (STGDMFRAAMKAETEMGLQAKSFIDKGALV) is NMP. AMP contacts are provided by residues Thr31, Arg36, 57–59 (ALV), 85–88 (GFPR), and Gln92. The LID stretch occupies residues 126-163 (GRRICKECGATYHLEFNPPAKADVCDKCGGELYQRSDD). Arg127 provides a ligand contact to ATP. The Zn(2+) site is built by Cys130 and Cys133. 136–137 (TY) is a binding site for ATP. Positions 150 and 153 each coordinate Zn(2+). AMP contacts are provided by Arg160 and Arg171. Gln199 is a binding site for ATP.

It belongs to the adenylate kinase family. In terms of assembly, monomer.

It is found in the cytoplasm. It catalyses the reaction AMP + ATP = 2 ADP. The protein operates within purine metabolism; AMP biosynthesis via salvage pathway; AMP from ADP: step 1/1. Its function is as follows. Catalyzes the reversible transfer of the terminal phosphate group between ATP and AMP. Plays an important role in cellular energy homeostasis and in adenine nucleotide metabolism. The protein is Adenylate kinase of Bacillus cereus (strain B4264).